The sequence spans 819 residues: LPS-assembly protein LptD (819 aa).

The signal sequence occupies residues 1-33 (MRQMKYQFKFNPLAAAIFTLLCGGSMQSSYADA).

This sequence belongs to the LptD family. Component of the lipopolysaccharide transport and assembly complex. Interacts with LptE and LptA.

It localises to the cell outer membrane. Its function is as follows. Together with LptE, is involved in the assembly of lipopolysaccharide (LPS) at the surface of the outer membrane. This Acinetobacter baylyi (strain ATCC 33305 / BD413 / ADP1) protein is LPS-assembly protein LptD.